The chain runs to 230 residues: Intracellular hyphae protein 1 (230 aa).

Positions 1–18 (MQTSFVALLAVAASLASA) are cleaved as a signal peptide. The interval 20 to 102 (PHGGNSYEAS…KNNTLPVPTC (83 aa)) is disordered. 10 repeat units span residues 30-33 (LPEP), 36-39 (LPEP), 42-45 (LPEP), 46-49 (VEGP), 50-53 (YKPK), 57-60 (LPEP), 65-68 (YKPK), 76-79 (VEGP), 80-83 (YKPK), and 84-87 (LPEP). The tract at residues 30–87 (LPEPTNLPEPTKLPEPVEGPYKPKPPILPEPIKDNYKPKTPILPEHVEGPYKPKLPEP) is 5 X 4 AA repeats of L-P-E-P. Residues 46 to 87 (VEGPYKPKPPILPEPIKDNYKPKTPILPEHVEGPYKPKLPEP) form a 2 X 4 AA repeats of V-E-G-P region. The segment at 50 to 83 (YKPKPPILPEPIKDNYKPKTPILPEHVEGPYKPK) is 3 X 4 AA repeats of Y-K-P-K. The segment covering 74-84 (EHVEGPYKPKL) has biased composition (basic and acidic residues). The N-linked (GlcNAc...) asparagine glycan is linked to N94. A LysM 1 domain is found at 108 to 152 (KTHKVKSGESLTTIAEKYDTGICNIAKLNNLADPNFVDLNQDLQI). N-linked (GlcNAc...) asparagine glycosylation is present at N161. The region spanning 183–227 (DIYSVVSGDTLTSIAQALQITLQSLKDANPGVVPEHLNVGQKLNV) is the LysM 2 domain.

In terms of assembly, forms a multimeric structure. In terms of processing, N-glycosylated and may be O-glycosylated. As to expression, expressed in penetration hyphae, infection vesicles and primary hyphae (intracellular hyphae).

Its subcellular location is the secreted. It localises to the cell wall. Its function is as follows. May have roles in host-pathogen interaction, including establishment and maintenance of biotrophy, prevention of host recognition of the fungus and a barrier to host defense molecules. This chain is Intracellular hyphae protein 1 (CIH1), found in Colletotrichum lindemuthianum (Bean anthracnose fungus).